The following is a 207-amino-acid chain: ATP synthase subunit b 2 (207 aa).

Residues 53–72 (TYASQLLWLVITFSVFYLLM) traverse the membrane as a helical segment.

Belongs to the ATPase B chain family. In terms of assembly, F-type ATPases have 2 components, F(1) - the catalytic core - and F(0) - the membrane proton channel. F(1) has five subunits: alpha(3), beta(3), gamma(1), delta(1), epsilon(1). F(0) has three main subunits: a(1), b(2) and c(10-14). The alpha and beta chains form an alternating ring which encloses part of the gamma chain. F(1) is attached to F(0) by a central stalk formed by the gamma and epsilon chains, while a peripheral stalk is formed by the delta and b chains.

Its subcellular location is the cell inner membrane. In terms of biological role, f(1)F(0) ATP synthase produces ATP from ADP in the presence of a proton or sodium gradient. F-type ATPases consist of two structural domains, F(1) containing the extramembraneous catalytic core and F(0) containing the membrane proton channel, linked together by a central stalk and a peripheral stalk. During catalysis, ATP synthesis in the catalytic domain of F(1) is coupled via a rotary mechanism of the central stalk subunits to proton translocation. Component of the F(0) channel, it forms part of the peripheral stalk, linking F(1) to F(0). The b'-subunit is a diverged and duplicated form of b found in plants and photosynthetic bacteria. This Rhizobium etli (strain CIAT 652) protein is ATP synthase subunit b 2 (atpF2).